We begin with the raw amino-acid sequence, 339 residues long: HTH-type transcriptional regulator SyrM 2 (339 aa).

One can recognise an HTH lysR-type domain in the interval 32–89; that stretch reads VDLNLLVELEALLQYRNITHAAQHVGRSQPAMSRALSRLRDMFNDDLLVRGSSGLVPT. Positions 49 to 68 form a DNA-binding region, H-T-H motif; the sequence is ITHAAQHVGRSQPAMSRALS.

The protein belongs to the LysR transcriptional regulatory family.

In terms of biological role, acts in trans to stimulate nod gene expression. This Sinorhizobium fredii (strain NBRC 101917 / NGR234) protein is HTH-type transcriptional regulator SyrM 2 (syrM2).